Reading from the N-terminus, the 212-residue chain is ATP-dependent Clp protease proteolytic subunit (212 aa).

Residue Ser107 is the Nucleophile of the active site. His132 is an active-site residue.

The protein belongs to the peptidase S14 family. In terms of assembly, fourteen ClpP subunits assemble into 2 heptameric rings which stack back to back to give a disk-like structure with a central cavity, resembling the structure of eukaryotic proteasomes.

It is found in the cytoplasm. It catalyses the reaction Hydrolysis of proteins to small peptides in the presence of ATP and magnesium. alpha-casein is the usual test substrate. In the absence of ATP, only oligopeptides shorter than five residues are hydrolyzed (such as succinyl-Leu-Tyr-|-NHMec, and Leu-Tyr-Leu-|-Tyr-Trp, in which cleavage of the -Tyr-|-Leu- and -Tyr-|-Trp bonds also occurs).. Cleaves peptides in various proteins in a process that requires ATP hydrolysis. Has a chymotrypsin-like activity. Plays a major role in the degradation of misfolded proteins. This Pseudoalteromonas atlantica (strain T6c / ATCC BAA-1087) protein is ATP-dependent Clp protease proteolytic subunit.